The sequence spans 385 residues: Centrosomal protein of 44 kDa (385 aa).

A binds with microtubules and centrioles region spans residues 11 to 191 (RKLEQRLRTL…TKCYKSALLE (181 aa)). A compositionally biased stretch (acidic residues) spans 194-204 (EEEEPTSDCEE). The disordered stretch occupies residues 194–224 (EEEEPTSDCEEDSHLQREMGSPFETAEETPN). Coiled coils occupy residues 224–263 (NSEQ…KGKI) and 353–379 (TEES…ELLK).

In terms of assembly, binds to centriolar microtubules.

It is found in the cytoplasm. The protein localises to the cytoskeleton. The protein resides in the microtubule organizing center. It localises to the centrosome. Its subcellular location is the centriole. It is found in the spindle pole. The protein localises to the midbody. Functionally, centriole-enriched microtubule-binding protein involved in centriole biogenesis. In collaboration with CEP295 and POC1B, is required for the centriole-to-centrosome conversion by ensuring the formation of bona fide centriole wall. Functions as a linker component that maintains centrosome cohesion. Associates with CROCC and regulates its stability and localization to the centrosome. In Xenopus tropicalis (Western clawed frog), this protein is Centrosomal protein of 44 kDa (cep44).